Here is a 402-residue protein sequence, read N- to C-terminus: uncharacterized protein (402 aa).

A run of 9 helical transmembrane segments spans residues 13–33 (IGVLDVLRGMAIFGILFVNLA), 68–88 (FFIQTKCILLFSFLFGFGMVV), 108–128 (LMALLLFGTIHAFLIWDGDIL), 149–169 (LLIWAVSLYLLFSIPFMLTSF), 223–243 (LNYFFASIPYFSMFLLGAAAA), 261–281 (LWMAGLVIGIGAQVLYSVTDK), 283–303 (ICLLIGAPFLMFFYVTTVVYL), 327–347 (YLMQSIVCTWIFYHYGLGLYG), and 353–373 (AGVLITIAVCAVQMVFSHLWL).

The protein resides in the cell membrane. Its function is as follows. Involved in transport. This is an uncharacterized protein from Bacillus subtilis (strain 168).